Here is a 413-residue protein sequence, read N- to C-terminus: MDFTNLKNTDPELLDMIKKEEERQEYNIELIASENFTSLSVMEAMGSLLTNKYAEGYPHKRYYGGCEFVDEVEDLARERLKKLFAAEHANVQPHSGSQANMAVYMSVLQTGDTILGMDLSHGGHLTHGSPVNFSGKLYNFISYGVDKETETIDYDQLKKIALENRPKMIVSGASAYPRIIDFEKIREICDEIDAYMMVDMAHIAGLVATGLHPSPVPYADFVTTTTHKTLRGPRGGAILCKEKYAKAVDKAIFPGIQGGPLMHTIAAKAVCFREALREDYKEYMQQVVKNTKVLGEELKNYGFRLISGGTDNHLLLIDLTNKNITGKDAEKLLDSVGITVNKNTIPFETLSPFITSGIRIGTPAVTTRGFKEEEMKKIAYFMNYSIEHREENLSQIKEQIKEICKKYPLYQNA.

Residues Leu119 and 123 to 125 (GHL) each bind (6S)-5,6,7,8-tetrahydrofolate. At Lys228 the chain carries N6-(pyridoxal phosphate)lysine. 351–353 (SPF) is a (6S)-5,6,7,8-tetrahydrofolate binding site.

It belongs to the SHMT family. As to quaternary structure, homodimer. Requires pyridoxal 5'-phosphate as cofactor.

The protein localises to the cytoplasm. It catalyses the reaction (6R)-5,10-methylene-5,6,7,8-tetrahydrofolate + glycine + H2O = (6S)-5,6,7,8-tetrahydrofolate + L-serine. It participates in one-carbon metabolism; tetrahydrofolate interconversion. Its pathway is amino-acid biosynthesis; glycine biosynthesis; glycine from L-serine: step 1/1. In terms of biological role, catalyzes the reversible interconversion of serine and glycine with tetrahydrofolate (THF) serving as the one-carbon carrier. This reaction serves as the major source of one-carbon groups required for the biosynthesis of purines, thymidylate, methionine, and other important biomolecules. Also exhibits THF-independent aldolase activity toward beta-hydroxyamino acids, producing glycine and aldehydes, via a retro-aldol mechanism. The protein is Serine hydroxymethyltransferase of Clostridium botulinum (strain Langeland / NCTC 10281 / Type F).